Reading from the N-terminus, the 1178-residue chain is Pyruvate carboxylase, mitochondrial (1178 aa).

A mitochondrion-targeting transit peptide spans 1–20 (MLKFQTVRGGLRLLGVRRSS). Lysine 35 and lysine 39 each carry N6-acetyllysine. Residues 36-486 (PIKKVMVANR…DTQFIDENPE (451 aa)) form the Biotin carboxylation domain. Lysine 79 is modified (N6-acetyllysine; alternate). Residue lysine 79 is modified to N6-succinyllysine; alternate. Lysine 148 and lysine 152 each carry N6-acetyllysine. ATP contacts are provided by lysine 152 and glutamate 236. The ATP-grasp domain maps to 156 to 353 (RAIAIAAGVP…LVHAQIHVSE (198 aa)). Lysine 241 is modified (N6-acetyllysine). Residue histidine 271 coordinates ATP. An N6-acetyllysine mark is found at lysine 297, lysine 316, and lysine 319. The active site involves arginine 328. Lysine 434 carries the N6-acetyllysine modification. N6-succinyllysine is present on lysine 442. The region spanning 563–832 (LLLMDTTFRD…DTEVPLERVF (270 aa)) is the Pyruvate carboxyltransferase domain. Substrate is bound at residue 571-575 (RDAHQ). Aspartate 572 lines the Mn(2+) pocket. Lysine 589 bears the N6-acetyllysine mark. Arginine 644 contacts substrate. N6-acetyllysine occurs at positions 661 and 717. Lysine 741 provides a ligand contact to Mn(2+). Lysine 741 carries the post-translational modification N6-carboxylysine. Position 748 is an N6-acetyllysine (lysine 748). Histidine 771 and histidine 773 together coordinate Mn(2+). N6-acetyllysine is present on lysine 892. Residue threonine 908 participates in substrate binding. Lysine 969 is subject to N6-acetyllysine. At lysine 988 the chain carries N6-acetyllysine; alternate. At lysine 988 the chain carries N6-succinyllysine; alternate. At lysine 992 the chain carries N6-acetyllysine. Phosphothreonine is present on threonine 1003. An N6-acetyllysine mark is found at lysine 1061, lysine 1090, and lysine 1124. The 70-residue stretch at 1109-1178 (KGQIGAPMPG…EGDDLILEIE (70 aa)) folds into the Biotinyl-binding domain. Position 1144 is an N6-biotinyllysine (lysine 1144).

In terms of assembly, homotetramer. Interacts (via the biotin carboxylation domain) with SIRT4. The cofactor is biotin. Requires Mn(2+) as cofactor. Acetylation of Lys-748 might play a role in catalytic activity regulation.

Its subcellular location is the mitochondrion matrix. It carries out the reaction hydrogencarbonate + pyruvate + ATP = oxaloacetate + ADP + phosphate + H(+). The protein operates within carbohydrate biosynthesis; gluconeogenesis. Its function is as follows. Pyruvate carboxylase catalyzes a 2-step reaction, involving the ATP-dependent carboxylation of the covalently attached biotin in the first step and the transfer of the carboxyl group to pyruvate in the second. Catalyzes in a tissue specific manner, the initial reactions of glucose (liver, kidney) and lipid (adipose tissue, liver, brain) synthesis from pyruvate. This chain is Pyruvate carboxylase, mitochondrial (Pc), found in Rattus norvegicus (Rat).